The following is a 402-amino-acid chain: Nicotinate phosphoribosyltransferase (402 aa).

The residue at position 224 (His224) is a Phosphohistidine; by autocatalysis.

The protein belongs to the NAPRTase family. Post-translationally, transiently phosphorylated on a His residue during the reaction cycle. Phosphorylation strongly increases the affinity for substrates and increases the rate of nicotinate D-ribonucleotide production. Dephosphorylation regenerates the low-affinity form of the enzyme, leading to product release.

The catalysed reaction is nicotinate + 5-phospho-alpha-D-ribose 1-diphosphate + ATP + H2O = nicotinate beta-D-ribonucleotide + ADP + phosphate + diphosphate. Its pathway is cofactor biosynthesis; NAD(+) biosynthesis; nicotinate D-ribonucleotide from nicotinate: step 1/1. Catalyzes the synthesis of beta-nicotinate D-ribonucleotide from nicotinate and 5-phospho-D-ribose 1-phosphate at the expense of ATP. The protein is Nicotinate phosphoribosyltransferase of Neisseria meningitidis serogroup C (strain 053442).